Consider the following 431-residue polypeptide: MKKLFIETLGCAMNVRDSEHMIAELNQKEPYELTQNVEEADLIIINTCSVREKPVAKLFSEIGVFNKYKKPGAKIGVAGCTASHLGKDIIKRAPSVDFVIGARNVSKITEVVDKKHAVEIDTDYDESTYAFGEYRTNPFKAMVNISIGCDKSCTFCIVPATRGDEISIPSDLLVQEITKAVATGAKEVMLLGQNVNNYGRRFGATEEKIDFTGLLQKISKIEGLERIRFTSPHPLHMDDAFIQEFASNPKICKQIHVPLQSGSTSLLKVMKRGYTKENFLGRCEKIRMLCPEATISTDIIVGFPGETEADFEDTMDVLEKVRFEQLFSFKYSPRPHTEAAEFEEQIDNKIAGERLTRLQTRHTEILDEIMDAQLGKVHEVYFDELKSNGRVSGRSDDGKLVFVEGSEELLGKIVDVRIIKTSRGALDGVLV.

Positions 2 to 117 constitute an MTTase N-terminal domain; sequence KKLFIETLGC…ITEVVDKKHA (116 aa). Residues cysteine 11, cysteine 48, cysteine 80, cysteine 149, cysteine 153, and cysteine 156 each coordinate [4Fe-4S] cluster. The region spanning 135–368 is the Radical SAM core domain; that stretch reads RTNPFKAMVN…QTRHTEILDE (234 aa). A TRAM domain is found at 371–431; that stretch reads DAQLGKVHEV…SRGALDGVLV (61 aa).

It belongs to the methylthiotransferase family. MiaB subfamily. As to quaternary structure, monomer. [4Fe-4S] cluster is required as a cofactor.

It is found in the cytoplasm. It catalyses the reaction N(6)-dimethylallyladenosine(37) in tRNA + (sulfur carrier)-SH + AH2 + 2 S-adenosyl-L-methionine = 2-methylsulfanyl-N(6)-dimethylallyladenosine(37) in tRNA + (sulfur carrier)-H + 5'-deoxyadenosine + L-methionine + A + S-adenosyl-L-homocysteine + 2 H(+). Functionally, catalyzes the methylthiolation of N6-(dimethylallyl)adenosine (i(6)A), leading to the formation of 2-methylthio-N6-(dimethylallyl)adenosine (ms(2)i(6)A) at position 37 in tRNAs that read codons beginning with uridine. This is tRNA-2-methylthio-N(6)-dimethylallyladenosine synthase from Sulfurovum sp. (strain NBC37-1).